The sequence spans 227 residues: Thymidylate kinase (227 aa).

16 to 23 contributes to the ATP binding site; that stretch reads GIDGAGKT.

This sequence belongs to the thymidylate kinase family.

It catalyses the reaction dTMP + ATP = dTDP + ADP. In terms of biological role, phosphorylation of dTMP to form dTDP in both de novo and salvage pathways of dTTP synthesis. The protein is Thymidylate kinase of Xanthomonas campestris pv. campestris (strain 8004).